A 161-amino-acid polypeptide reads, in one-letter code: Interleukin-17F (161 aa).

Residues 1–28 (MKCTRETAMVKSLLLLMLGLAILREVAA) form the signal peptide. N83 carries N-linked (GlcNAc...) asparagine glycosylation. Cystine bridges form between C100–C150 and C105–C152.

The protein belongs to the IL-17 family. In terms of assembly, homodimer; disulfide-linked. Heterodimer with IL17A (IL17A-IL17F). Forms complexes with IL17RA and IL17RC receptors with 2:1 binding stoichiometry: two receptor chains for one interleukin molecule. IL17F homodimer forms predominantly complexes with IL17RC homodimer, whereas IL17A-IL17F favors complexes with IL17RA-IL17RC. IL17RA and IL17RC chains cannot distinguish between IL17A and IL17F molecules, potentially enabling the formation of topologically distinct complexes. As to expression, expressed by T-helper 17 cells (Th17) (at protein level). The expression pattern reflects the differentiation state. In fully differentiated Th17 cells, IL17A-IL17F heterodimers are produced at higher levels than IL17A-IL17A and IL17F-IL17F dimers. Dominantly secreted in intestine. Expressed by resident cells of the lamina propria, both epithelial cells and immune cell subsets including natural killer cells, dendritic cells, macrophages and various T and B cell subsets. Expressed by epithelial cells and innate immune cells in the colon. Expressed in group 3 innate lymphoid cells.

Its subcellular location is the secreted. Effector cytokine of innate and adaptive immune system involved in antimicrobial host defense and maintenance of tissue integrity. IL17A-IL17F signals via IL17RA-IL17RC heterodimeric receptor complex, triggering homotypic interaction of IL17RA and IL17RC chains with TRAF3IP2 adapter through SEFIR domains. This leads to downstream TRAF6-mediated activation of NF-kappa-B and MAPkinase pathways ultimately resulting in transcriptional activation of cytokines, chemokines, antimicrobial peptides and matrix metalloproteinases, with potential strong immune inflammation. IL17A-IL17F is primarily involved in host defense against extracellular bacteria and fungi by inducing neutrophilic inflammation. As signature effector cytokine of T-helper 17 cells (Th17), primarily induces neutrophil activation and recruitment at infection and inflammatory sites. Stimulates the production of antimicrobial beta-defensins DEFB1, DEFB103A, and DEFB104A by mucosal epithelial cells, limiting the entry of microbes through the epithelial barriers. IL17F homodimer can signal via IL17RC homodimeric receptor complex, triggering downstream activation of TRAF6 and NF-kappa-B signaling pathway. Via IL17RC induces transcriptional activation of IL33, a potent cytokine that stimulates group 2 innate lymphoid cells and adaptive T-helper 2 cells involved in pulmonary allergic response to fungi. Likely via IL17RC, promotes sympathetic innervation of peripheral organs by coordinating the communication between gamma-delta T cells and parenchymal cells. Stimulates sympathetic innervation of thermogenic adipose tissue by driving TGFB1 expression. Regulates the composition of intestinal microbiota and immune tolerance by inducing antimicrobial proteins that specifically control the growth of commensal Firmicutes and Bacteroidetes. The sequence is that of Interleukin-17F (Il17f) from Mus musculus (Mouse).